A 773-amino-acid chain; its full sequence is Polyribonucleotide nucleotidyltransferase (773 aa).

Mg(2+) is bound by residues D490 and D496. The region spanning 557–616 (PKIDTITIPVDKIKVVIGKGGEQIDKIIAETGVKIDIDDEGLCSIFSSDQAAIDRAKEII) is the KH domain. The region spanning 626 to 694 (GEIYDAKVVR…DKGRVDASMR (69 aa)) is the S1 motif domain. Residues 700–721 (PEGYVEPERKPRERRENGDRRK) show a composition bias toward basic and acidic residues. The disordered stretch occupies residues 700–773 (PEGYVEPERK…FPELSTKKPE (74 aa)). Low complexity predominate over residues 739–748 (RNNQGNKVGN). Residues 751–773 (FELRERKSHIDEEFPELSTKKPE) show a composition bias toward basic and acidic residues.

It belongs to the polyribonucleotide nucleotidyltransferase family. Requires Mg(2+) as cofactor.

The protein resides in the cytoplasm. The catalysed reaction is RNA(n+1) + phosphate = RNA(n) + a ribonucleoside 5'-diphosphate. Functionally, involved in mRNA degradation. Catalyzes the phosphorolysis of single-stranded polyribonucleotides processively in the 3'- to 5'-direction. The chain is Polyribonucleotide nucleotidyltransferase from Lactococcus lactis subsp. lactis (strain IL1403) (Streptococcus lactis).